A 158-amino-acid chain; its full sequence is uncharacterized protein (158 aa).

This is an uncharacterized protein from Methanocaldococcus jannaschii (strain ATCC 43067 / DSM 2661 / JAL-1 / JCM 10045 / NBRC 100440) (Methanococcus jannaschii).